A 570-amino-acid chain; its full sequence is Frizzled-2 (570 aa).

A signal peptide spans 1 to 28; the sequence is MRARSALPRSALPRLLLPLLLLPAAGPA. Residues 29-252 are Extracellular-facing; it reads QFHGEKGISI…QEETRFARLW (224 aa). One can recognise an FZ domain in the interval 39–158; sequence PDHGFCQPIS…HGAEQICVGQ (120 aa). Disulfide bonds link Cys-44/Cys-105, Cys-52/Cys-98, Cys-89/Cys-126, Cys-115/Cys-155, and Cys-119/Cys-143. Asn-58 carries an N-linked (GlcNAc...) asparagine glycan. The N-linked (GlcNAc...) asparagine glycan is linked to Asn-159. The disordered stretch occupies residues 166 to 194; that stretch reads PALLTTAPPSGLQPGAGGTPGGPGGGGSP. Over residues 179–193 the composition is skewed to gly residues; the sequence is PGAGGTPGGPGGGGS. A helical membrane pass occupies residues 253-273; that stretch reads ILTWSVLCCASTFFTVTTYLV. Topologically, residues 274-284 are cytoplasmic; that stretch reads DMQRFRYPERP. A helical transmembrane segment spans residues 285–305; sequence IIFLSGCYTMVSVAYIAGFVL. The Extracellular segment spans residues 306 to 332; sequence QERVVCNERFSEDGYRTVVQGTKKEGC. A helical transmembrane segment spans residues 333–353; it reads TILFMMLYFFSMASSIWWVIL. Residues 354-375 lie on the Cytoplasmic side of the membrane; it reads SLTWFLAAGMKWGHEAIEANSQ. Residues 376–396 traverse the membrane as a helical segment; it reads YFHLAAWAVPAVKTITILAMG. The Extracellular segment spans residues 397–419; it reads QIDGDLLSGVCFVGLNSLDPLRG. The chain crosses the membrane as a helical span at residues 420–440; it reads FVLAPLFVYLFIGTSFLLAGF. Over 441–466 the chain is Cytoplasmic; that stretch reads VSLFRIRTIMKHDGTKTEKLERLMVR. Residues 467 to 487 traverse the membrane as a helical segment; it reads IGVFSVLYTVPATIVIACYFY. Over 488–524 the chain is Extracellular; that stretch reads EQAFREHWERSWVSQHCKSLAIPCPAHYTPRMSPDFT. The helical transmembrane segment at 525–545 threads the bilayer; the sequence is VYMIKYLMTLIVGITSGFWIW. The Cytoplasmic portion of the chain corresponds to 546–570; it reads SGKTLHSWRKFYTRLTNSRHGETTV. The Lys-Thr-X-X-X-Trp motif, mediates interaction with the PDZ domain of Dvl family members signature appears at 548–553; it reads KTLHSW. The PDZ-binding motif lies at 568 to 570; sequence TTV.

The protein belongs to the G-protein coupled receptor Fz/Smo family. In terms of processing, ubiquitinated by ZNRF3, leading to its degradation by the proteasome. As to expression, expressed in embryonic and adult heart, lung, chondrocytes and brain. Also expressed in the developing gastrointestinal tract (strongest in foregut), much weaker expression in the adult. No expression in fetal liver and adult spleen. Up-regulated in esophageal squamous cell carcinomas.

The protein localises to the membrane. Its subcellular location is the cell membrane. Its function is as follows. Receptor for Wnt proteins. Most of frizzled receptors are coupled to the beta-catenin canonical signaling pathway, which leads to the activation of disheveled proteins, inhibition of GSK-3 kinase, nuclear accumulation of beta-catenin and activation of Wnt target genes. A second signaling pathway involving PKC and calcium fluxes has been seen for some family members, but it is not yet clear if it represents a distinct pathway or if it can be integrated in the canonical pathway, as PKC seems to be required for Wnt-mediated inactivation of GSK-3 kinase. Both pathways seem to involve interactions with G-proteins. May be involved in transduction and intercellular transmission of polarity information during tissue morphogenesis and/or in differentiated tissues. The sequence is that of Frizzled-2 (Fzd2) from Mus musculus (Mouse).